Consider the following 523-residue polypeptide: MELTLWTYEGPPHVGAMRIASSMKDIHYVLHAPQGDTYADLLFTMIERRGQRPPVTYTTFQARDLGGDTAELVKKNIKEAVERFKPKTLLVGESCTAELIQDQPGALAKGMGFDMPIVNLELPAYSKKENWGASETFYQLTRTLLKDKVSFSDKISPFRWKELGRRPKVNILGPSLLGFRCRDDVIEIQRILSEQGIDTNVVAPLGASPDDIERLIDAEINICLYQEIAEASCEWLKRNFGMEYTNTIPIGIKNTIEFINEVHEKLDLPLTNKEELENKSKLPWYSKSVDSNYLTGKRVFIFGDGTHAIAAAKIAKEELGFEVVGLGTYSREMARQVRATAKDLNVEALITNNYLEVEDAMKKAAPELVLGTQMERHSAKRLGIPCSVISTPMHVQDVPARYSPQMGWEGANVIFDDWVHPLMMGLEEHLIDMFKHDFEFVDGHQSHLGHTATNKNNILNSDEKKEKNSKEEIIWTESGRAELTKVPFFVRGKVKTNTEKYAILRGIPEISDETLYDAKAYFS.

D36 lines the [4Fe-4S] cluster pocket. The active-site Proton donor is D290. 425-426 (GL) provides a ligand contact to substrate.

It belongs to the ChlB/BchB/BchZ family. As to quaternary structure, protochlorophyllide reductase is composed of three subunits; ChlL, ChlN and ChlB. Forms a heterotetramer of two ChlB and two ChlN subunits. It depends on [4Fe-4S] cluster as a cofactor.

The enzyme catalyses chlorophyllide a + oxidized 2[4Fe-4S]-[ferredoxin] + 2 ADP + 2 phosphate = protochlorophyllide a + reduced 2[4Fe-4S]-[ferredoxin] + 2 ATP + 2 H2O. The protein operates within porphyrin-containing compound metabolism; chlorophyll biosynthesis (light-independent). In terms of biological role, component of the dark-operative protochlorophyllide reductase (DPOR) that uses Mg-ATP and reduced ferredoxin to reduce ring D of protochlorophyllide (Pchlide) to form chlorophyllide a (Chlide). This reaction is light-independent. The NB-protein (ChlN-ChlB) is the catalytic component of the complex. The protein is Light-independent protochlorophyllide reductase subunit B of Prochlorococcus marinus (strain MIT 9301).